A 140-amino-acid polypeptide reads, in one-letter code: 3-hydroxyacyl-[acyl-carrier-protein] dehydratase FabZ (140 aa).

Residue His-47 is part of the active site.

This sequence belongs to the thioester dehydratase family. FabZ subfamily.

Its subcellular location is the cytoplasm. It catalyses the reaction a (3R)-hydroxyacyl-[ACP] = a (2E)-enoyl-[ACP] + H2O. Functionally, involved in unsaturated fatty acids biosynthesis. Catalyzes the dehydration of short chain beta-hydroxyacyl-ACPs and long chain saturated and unsaturated beta-hydroxyacyl-ACPs. This Streptococcus sanguinis (strain SK36) protein is 3-hydroxyacyl-[acyl-carrier-protein] dehydratase FabZ.